The primary structure comprises 957 residues: Glycine dehydrogenase (decarboxylating) (957 aa).

An N6-(pyridoxal phosphate)lysine modification is found at Lys-708.

Belongs to the GcvP family. As to quaternary structure, the glycine cleavage system is composed of four proteins: P, T, L and H. The cofactor is pyridoxal 5'-phosphate.

The enzyme catalyses N(6)-[(R)-lipoyl]-L-lysyl-[glycine-cleavage complex H protein] + glycine + H(+) = N(6)-[(R)-S(8)-aminomethyldihydrolipoyl]-L-lysyl-[glycine-cleavage complex H protein] + CO2. In terms of biological role, the glycine cleavage system catalyzes the degradation of glycine. The P protein binds the alpha-amino group of glycine through its pyridoxal phosphate cofactor; CO(2) is released and the remaining methylamine moiety is then transferred to the lipoamide cofactor of the H protein. This is Glycine dehydrogenase (decarboxylating) from Escherichia coli O1:K1 / APEC.